Here is a 330-residue protein sequence, read N- to C-terminus: Protoheme IX farnesyltransferase (330 aa).

Transmembrane regions (helical) follow at residues 30–50 (LVKP…MWMA), 58–78 (FFIT…INMV), 106–126 (LIFS…FTNL), 127–147 (LAAG…THWL), 155–175 (IVIG…ATTG), 182–202 (WVMF…LAIL), 228–248 (ILLY…PLGM), 249–269 (LGSF…WKAV), and 281–301 (AASL…AMGL).

Belongs to the UbiA prenyltransferase family. Protoheme IX farnesyltransferase subfamily.

The protein resides in the cell inner membrane. The enzyme catalyses heme b + (2E,6E)-farnesyl diphosphate + H2O = Fe(II)-heme o + diphosphate. It participates in porphyrin-containing compound metabolism; heme O biosynthesis; heme O from protoheme: step 1/1. In terms of biological role, converts heme B (protoheme IX) to heme O by substitution of the vinyl group on carbon 2 of heme B porphyrin ring with a hydroxyethyl farnesyl side group. The protein is Protoheme IX farnesyltransferase of Synechococcus sp. (strain JA-2-3B'a(2-13)) (Cyanobacteria bacterium Yellowstone B-Prime).